A 283-amino-acid polypeptide reads, in one-letter code: uncharacterized protein (283 aa).

This is an uncharacterized protein from Streptomyces coelicolor (strain ATCC BAA-471 / A3(2) / M145).